A 3011-amino-acid chain; its full sequence is Genome polyprotein (3011 aa).

Serine 2 is modified (N-acetylserine; by host). The segment at 2-23 (STNPKPQRKTKRNTNRRPQDVK) is interaction with STAT1. The interval 2–58 (STNPKPQRKTKRNTNRRPQDVKFPGGGQIVGGVYLLPRRGPRVGVRATRKTSERSQP) is interaction with EIF2AK2/PKR. The segment at 2–59 (STNPKPQRKTKRNTNRRPQDVKFPGGGQIVGGVYLLPRRGPRVGVRATRKTSERSQPR) is interaction with DDX3X. Positions 2–75 (STNPKPQRKT…PKARRPEGRS (74 aa)) are disordered. Residues 2–168 (STNPKPQRKT…EDGVNYATGN (167 aa)) lie on the Cytoplasmic side of the membrane. 2 consecutive short sequence motifs (nuclear localization signal) follow at residues 5-13 (PKPQRKTKR) and 38-43 (PRRGPR). The segment covering 7–16 (PQRKTKRNTN) has biased composition (basic residues). Serine 53 carries the phosphoserine; by host modification. 2 consecutive short sequence motifs (nuclear localization signal) follow at residues 58-64 (PRGRRQP) and 66-71 (PKARRP). The segment covering 58–68 (PRGRRQPIPKA) has biased composition (basic residues). Serine 99 is subject to Phosphoserine; by host. The important for endoplasmic reticulum and mitochondrial localization stretch occupies residues 112 to 152 (PRRRSRNLGKVIDTLTCGFADLMGYIPLVGAPLGGAARALA). Residue serine 116 is modified to Phosphoserine; by host PKA. The interaction with APOA2 stretch occupies residues 122-173 (VIDTLTCGFADLMGYIPLVGAPLGGAARALAHGVRVLEDGVNYATGNLPGCS). The segment at 164–167 (YATG) is important for lipid droplets localization. The chain crosses the membrane as a helical span at residues 169-189 (LPGCSFSIFLLALLSCLTVPA). A propeptide spans 178-191 (LLALLSCLTVPASA) (ER anchor for the core protein, removed in mature form by host signal peptidase). The Lumenal portion of the chain corresponds to 190-358 (SAVGVRNSSG…AGAHWGVLAG (169 aa)). Residues asparagine 196, asparagine 209, and asparagine 234 are each glycosylated (N-linked (GlcNAc...) asparagine; by host). Residues 265–296 (IVGAAAFCSAMYVGDLCGSIFLVGQIFTFSPR) form an important for fusion region. Asparagine 305 carries N-linked (GlcNAc...) asparagine; by host glycosylation. The chain crosses the membrane as a helical span at residues 359–379 (LAYYSMVGNWAKVVVVLLLFA). Topologically, residues 380–725 (GVDAETRVTG…WEYVVLLFLL (346 aa)) are lumenal. The segment at 385-411 (TRVTGGAAGHTAFGFASFLAPGAKQKI) is HVR1. Asparagine 417, asparagine 423, asparagine 430, and asparagine 448 each carry an N-linked (GlcNAc...) (high mannose) asparagine; by host glycan. Disulfide bonds link cysteine 429/cysteine 552, cysteine 452/cysteine 459, cysteine 486/cysteine 494, and cysteine 503/cysteine 508. The interval 474–479 (HEGNAS) is HVR2. The CD81-binding 1 stretch occupies residues 480–493 (DDQRPYCWHYALRP). N-linked (GlcNAc...) (high mannose) asparagine; by host glycosylation is present at asparagine 532. Asparagine 540 carries an N-linked (GlcNAc...) asparagine; by host glycan. The interval 544 to 551 (PPMGNWFG) is CD81-binding 2. N-linked (GlcNAc...) (high mannose) asparagine; by host glycosylation is present at asparagine 556. An intrachain disulfide couples cysteine 564 to cysteine 569. N-linked (GlcNAc...) (high mannose) asparagine; by host glycosylation is present at asparagine 576. Disulfide bonds link cysteine 581–cysteine 585, cysteine 597–cysteine 620, and cysteine 607–cysteine 644. 2 N-linked (GlcNAc...) (high mannose) asparagine; by host glycosylation sites follow: asparagine 623 and asparagine 645. Cysteines 652 and 677 form a disulfide. Residues 660-671 (AELSPLLLSTTQ) are PKR/eIF2-alpha phosphorylation homology domain (PePHD). Residues 726 to 746 (LADARICACLWMMLLISQVEA) form a helical membrane-spanning segment. Residues 747 to 757 (ALENLIVLNAA) lie on the Lumenal side of the membrane. The helical transmembrane segment at 758-778 (SLVGTHGIVPFFIFFCAAWYL) threads the bilayer. Over 779–781 (KGK) the chain is Cytoplasmic. Residues 782–803 (WAPGLAYSVYGMWPLLLLLLAL) traverse the membrane as a helical segment. Residues 804 to 813 (PQRAYALDQE) lie on the Lumenal side of the membrane. A helical transmembrane segment spans residues 814–834 (LAASCGATVFICLAVLTLSPY). Residues 835 to 838 (YKQY) are Cytoplasmic-facing. The chain crosses the membrane as a helical span at residues 839–859 (MARGIWWLQYMLTRAEALLQV). Topologically, residues 860 to 881 (WVPPLNARGGRDGVVLLTCVLH) are lumenal. The chain crosses the membrane as a helical span at residues 882-902 (PHLLFEITKIMLAILGPLWIL). Residues 903–1026 (QASLLKVPYF…ALTDKGWRLL (124 aa)) form the Peptidase C18 domain. At 903-1657 (QASLLKVPYF…CMSADLEVVT (755 aa)) the chain is on the cytoplasmic side. The interval 904 to 1206 (ASLLKVPYFV…PVESLETTMR (303 aa)) is protease NS2-3. Cysteine 922 carries the S-palmitoyl cysteine; by host lipid modification. The segment at 929-949 (AGGQYVQMALLKLGAFAGTYI) is interaction with host SCPS1. Residues histidine 952, glutamate 972, and cysteine 993 each act as for protease NS2 activity; shared with dimeric partner in the active site. Residues 1027 to 1208 (APITAYAQQT…ESLETTMRSP (182 aa)) enclose the Peptidase S29 domain. Residues histidine 1083 and aspartate 1107 each act as charge relay system; for serine protease NS3 activity in the active site. 2 residues coordinate Zn(2+): cysteine 1123 and cysteine 1125. The active-site Charge relay system; for serine protease NS3 activity is serine 1165. Cysteine 1171 and histidine 1175 together coordinate Zn(2+). The Helicase ATP-binding domain occupies 1217–1369 (PTVPQSYQVA…SNIEEVALST (153 aa)). Residue 1230–1237 (APTGSGKS) participates in ATP binding. The Mg(2+) site is built by serine 1237 and glutamate 1317. The DECH box signature appears at 1316-1319 (DECH). Residues 1486-1497 (QRRGRTGRGKHG) form an RNA-binding region. A helical membrane pass occupies residues 1658–1678 (STWVLVGGVLAALAAYCLSTG). Positions 1679–1690 (SVVIVGRIILSG) are NS3-binding. The Cytoplasmic segment spans residues 1679–1805 (SVVIVGRIIL…AVTSPLTTQQ (127 aa)). A helical transmembrane segment spans residues 1806 to 1824 (TLLFNILGGWVAAQLAAPA). Residues 1825-1828 (AATA) lie on the Lumenal side of the membrane. A helical transmembrane segment spans residues 1829–1849 (FVGAGITGAVIGSVGLGKVLV). Aspartate 1850 is a topological domain (cytoplasmic). A helical transmembrane segment spans residues 1851 to 1871 (ILAGYGAGVAGALVAFKIMSG). The Lumenal portion of the chain corresponds to 1872-1881 (EAPTAEDLVN). A helical transmembrane segment spans residues 1882-1902 (LLPAILSPGALVVGVVCAAIL). The Cytoplasmic segment spans residues 1903-1972 (RRHVGPGEGA…WISSDCTAPC (70 aa)). Residues cysteine 1968 and cysteine 1972 are each lipidated (S-palmitoyl cysteine; by host). The stretch at 1973–2002 (AGSWLKDVWDWICEVLSDFKSWLKAKLMPQ) is an intramembrane region. Residues 2003-2990 (LPGIPFVSCQ…YHSVSHVRPR (988 aa)) lie on the Cytoplasmic side of the membrane. Zn(2+) contacts are provided by cysteine 2011, cysteine 2029, cysteine 2031, and cysteine 2052. The tract at residues 2120–2208 (EFFTEVDGVR…ASSSASQLSA (89 aa)) is FKBP8-binding. Residues 2120-2332 (EFFTEVDGVR…PVPPPRRKRT (213 aa)) are transcriptional activation. Residues 2135–2139 (PPCKP) form an interaction with non-structural protein 4A region. Residues 2189-2441 (RLNRGSPPSL…TPCAAEETKL (253 aa)) form an interaction with host SKP2 region. Serine 2194 carries the post-translational modification Phosphoserine; by host; in p56. Residues serine 2197, serine 2201, serine 2204, serine 2207, and serine 2210 each carry the phosphoserine; by host; in p58 modification. The interval 2210 to 2249 (SLKATCTTHHDSPDADLITANLLWRQEMGGNITRVESENK) is ISDR. An interaction with EIF2AK2/PKR region spans residues 2210–2275 (SLKATCTTHH…REISVPAEIL (66 aa)). The tract at residues 2249–2306 (KIVILDSFDPLVAEEDDREISVPAEILLKSKKFPPAMPIWARPDYNPPLVEPWKRPDY) is NS4B-binding. Residues 2322-2325 (TPVP) carry the SH3-binding motif. The Nuclear localization signal motif lies at 2326-2334 (PPRRKRTVV). A Glycyl lysine isopeptide (Lys-Gly) (interchain with G-Cter in ubiquitin) cross-link involves residue lysine 2350. The span at 2352 to 2373 (FGSSTTSGVTSGEAAESSPAPS) shows a compositional bias: low complexity. The disordered stretch occupies residues 2352–2409 (FGSSTTSGVTSGEAAESSPAPSCDGELDSEAESYSSMPPLEGEPGDPDLSDGSWSTVS). The interval 2354–2377 (SSTTSGVTSGEAAESSPAPSCDGE) is V3. Phosphoserine; by host is present on residues serine 2449 and serine 2462. Positions 2634-2752 (PMGFSYDTRC…ICESAGVQED (119 aa)) constitute a RdRp catalytic domain. Residues aspartate 2640, aspartate 2738, and aspartate 2739 each coordinate Mg(2+). A helical membrane pass occupies residues 2991-3011 (WFFWCLLLLSVGVGIYLLPNR).

The protein belongs to the hepacivirus polyprotein family. As to quaternary structure, homooligomer. Interacts with E1 (via C-terminus). Interacts with the non-structural protein 5A. Interacts (via N-terminus) with host STAT1 (via SH2 domain); this interaction results in decreased STAT1 phosphorylation and ubiquitin-mediated proteasome-dependent STAT1 degradation, leading to decreased IFN-stimulated gene transcription. Interacts with host STAT3; this interaction constitutively activates STAT3. Interacts with host LTBR receptor. Interacts with host TNFRSF1A receptor and possibly induces apoptosis. Interacts with host HNRPK. Interacts with host YWHAE. Interacts with host UBE3A/E6AP. Interacts with host DDX3X. Interacts with host APOA2. Interacts with host RXRA protein. Interacts with host SP110 isoform 3/Sp110b; this interaction sequesters the transcriptional corepressor SP110 away from the nucleus. Interacts with host CREB3 nuclear transcription protein; this interaction triggers cell transformation. Interacts with host ACY3. Interacts with host C1QR1. Interacts with host RBM24; this interaction, which enhances the interaction of the mature core protein with 5'-UTR, may inhibit viral translation and favor replication. Interacts with host EIF2AK2/PKR; this interaction induces the autophosphorylation of EIF2AK2. Part of the viral assembly initiation complex composed of NS2, E1, E2, NS3, NS4A, NS5A and the mature core protein. In terms of assembly, forms a heterodimer with envelope glycoprotein E2. Interacts with mature core protein. Interacts with protease NS2. The heterodimer E1/E2 interacts with host CLDN1; this interaction plays a role in viral entry into host cell. Interacts with host SPSB2 (via C-terminus). Part of the viral assembly initiation complex composed of NS2, E1, E2, NS3, NS4A, NS5A and the mature core protein. Interacts with host NEURL3; this interaction prevents E1 binding to glycoprotein E2. Forms a heterodimer with envelope glycoprotein E1. Interacts with host CD81 and SCARB1 receptors; these interactions play a role in viral entry into host cell. Interacts with host EIF2AK2/PKR; this interaction inhibits EIF2AK2 and probably allows the virus to evade the innate immune response. Interacts with host CD209/DC-SIGN and CLEC4M/DC-SIGNR. Interact with host SPCS1; this interaction is essential for viral particle assembly. Interacts with protease NS2. The heterodimer E1/E2 interacts with host CLDN1; this interaction plays a role in viral entry into host cell. Part of the viral assembly initiation complex composed of NS2, E1, E2, NS3, NS4A, NS5A and the mature core protein. Interacts with host SLC3A2/4F2hc; the interaction may facilitate viral entry into host cell. Interacts with human PLSCR1. As to quaternary structure, homohexamer. Homoheptamer. Interacts with protease NS2. In terms of assembly, homodimer. Interacts with host SPCS1; this interaction is essential for viral particle assembly. Interacts with envelope glycoprotein E1. Interacts with envelope glycoprotein E2. Interacts with viroporin p7. Interacts with serine protease/helicase NS3. Part of the replication complex composed of NS2, NS3, NS4A, NS4B, NS5A and the RNA-directed RNA polymerase embedded in an ER-derived membranous web. Part of the viral assembly initiation complex composed of NS2, E1, E2, NS3, NS4A, NS5A and the mature core protein. Interacts with protease NS2. Interacts with non-structural protein 4A; this interaction stabilizes the folding of NS3 serine protease. NS3-NS4A interaction is essential for NS3 activation and allows membrane anchorage of the latter. NS3/NS4A complex also prevents phosphorylation of host IRF3, thus preventing the establishment of dsRNA induced antiviral state. Interacts with host MAVS; this interaction leads to the cleavage and inhibition of host MAVS. Interacts with host TICAM1; this interaction leads to the cleavage and inhibition of host TICAM1. Interacts with host TANK-binding kinase/TBK1; this interaction results in the inhibition of the association between TBK1 and IRF3, which leads to the inhibition of IRF3 activation. Interacts with host RBM24. Part of the replication complex composed of NS2, NS3, NS4A, NS4B, NS5A and the RNA-directed RNA polymerase embedded in an ER-derived membranous web. Part of the viral assembly initiation complex composed of NS2, E1, E2, NS3, NS4A, NS5A and the mature core protein. As to quaternary structure, interacts with NS3 serine protease; this interaction stabilizes the folding of NS3 serine protease. NS3-NS4A interaction is essential for NS3 activation and allows membrane anchorage of the latter. Interacts with non-structural protein 5A (via N-terminus). Part of the replication complex composed of NS2, NS3, NS4A, NS4B, NS5A and the RNA-directed RNA polymerase embedded in an ER-derived membranous web. Part of the viral assembly initiation complex composed of NS2, E1, E2, NS3, NS4A, NS5A and the mature core protein. In terms of assembly, homomultimer. Interacts with non-structural protein NS5A. Interacts with host PLA2G4C; this interaction likely initiates the recruitment of replication complexes to lipid droplets. Interacts with host STING; this interaction disrupts the interaction between STING and TBK1 thereby suppressing the interferon signaling. Part of the replication complex composed of NS2, NS3, NS4A, NS4B, NS5A and the RNA-directed RNA polymerase embedded in an ER-derived membranous web. Monomer. Homodimer; dimerization is required for RNA-binding. Interacts with the mature core protein. Interacts (via N-terminus) with non-structural protein 4A. Interacts with non-structural protein 4B. Interacts (via region D2) with RNA-directed RNA polymerase. Part of the viral assembly initiation complex composed of NS2, E1, E2, NS3, NS4A, NS5A and the mature core protein. Part of the replication complex composed of NS2, NS3, NS4A, NS4B, NS5A and the RNA-directed RNA polymerase embedded in an ER-derived membranous web. Interacts with host GRB2. Interacts with host BIN1. Interacts with host PIK3R1. Interacts with host SRCAP. Interacts with host FKBP8. Interacts (via C-terminus) with host VAPB (via MSP domain). Interacts with host EIF2AK2/PKR; this interaction leads to disruption of EIF2AK2 dimerization by NS5A and probably allows the virus to evade the innate immune response. Interacts (via N-terminus) with host PACSIN2 (via N-terminus); this interaction attenuates protein kinase C alpha-mediated phosphorylation of PACSIN2 by disrupting the interaction between PACSIN2 and PRKCA. Interacts (via N-terminus) with host SRC kinase (via SH2 domain). Interacts with most Src-family kinases. Interacts with host IFI27 and SKP2; promotes the ubiquitin-mediated proteasomal degradation of NS5A. Interacts with host GPS2. Interacts with host TNFRSF21; this interaction allows the modulation by the virus of JNK, p38 MAPK, STAT3, and Akt signaling pathways in a DR6-dependent manner. Interacts (via N-terminus) with host CIDEB (via N-terminus); this interaction seems to regulate the association of HCV particles with APOE. Interacts with host CHKA/Choline Kinase-alpha; CHKA bridges host PI4KA and NS5A and potentiates NS5A-stimulated PI4KA activity, which then facilitates the targeting of the ternary complex to the ER for viral replication. Interacts with host SPSB2 (via C-terminus); this interaction targets NS5A for ubiquitination and degradation. Interacts with host RAB18; this interaction may promote the association of NS5A and other replicase components with lipid droplets. Interacts (via region D2) with host PPIA/CYPA; the interaction stimulates RNA-binding ability of NS5A and is dependent on the peptidyl-prolyl cis-trans isomerase activity of PPIA/CYPA. Interacts with host TRIM14; this interaction induces the degradation of NS5A. As to quaternary structure, homooligomer. Interacts with non-structural protein 5A. Interacts with host VAPB. Interacts with host PRK2/PKN2. Interacts with host HNRNPA1 and SEPT6; these interactions facilitate viral replication. Part of the replication complex composed of NS2, NS3, NS4A, NS4B, NS5A and the RNA-directed RNA polymerase. Zn(2+) is required as a cofactor. Mg(2+) serves as cofactor. In terms of processing, specific enzymatic cleavages in vivo yield mature proteins. The structural proteins, core, E1, E2 and p7 are produced by proteolytic processing by host signal peptidases. The core protein precursor is synthesized as a 23 kDa, which is retained in the ER membrane through the hydrophobic signal peptide. Cleavage by the signal peptidase releases the 21 kDa mature core protein. The cleavage of the core protein precursor occurs between aminoacids 176 and 188 but the exact cleavage site is not known. Some degraded forms of the core protein appear as well during the course of infection. The other proteins (p7, NS2, NS3, NS4A, NS4B, NS5A and NS5B) are cleaved by the viral proteases. Autoprocessing between NS2 and NS3 is mediated by the NS2 cysteine protease catalytic domain and regulated by the NS3 N-terminal domain. Phosphorylated by host PKC and PKA. Post-translationally, ubiquitinated; mediated by UBE3A and leading to core protein subsequent proteasomal degradation. In terms of processing, highly N-glycosylated. Palmitoylation is required for NS2/3 autoprocessing and E2 recruitment to membranes. Post-translationally, palmitoylated. This modification may play a role in its polymerization or in protein-protein interactions. In terms of processing, phosphorylated on serines in a basal form termed p56. p58 is a hyperphosphorylated form of p56. p56 and p58 coexist in the cell in roughly equivalent amounts. Hyperphosphorylation is dependent on the presence of NS4A. Host CSNK1A1/CKI-alpha or RPS6KB1 kinases may be responsible for NS5A phosphorylation. Tyrosine phosphorylation is essential for the interaction with host SRC. Post-translationally, the N-terminus is phosphorylated by host PRK2/PKN2.

It localises to the host endoplasmic reticulum membrane. It is found in the host mitochondrion membrane. Its subcellular location is the virion. The protein localises to the host cytoplasm. The protein resides in the host nucleus. It localises to the host lipid droplet. It is found in the virion membrane. Its subcellular location is the host mitochondrion. The protein localises to the host cell membrane. The protein resides in the host perinuclear region. The catalysed reaction is Hydrolysis of four peptide bonds in the viral precursor polyprotein, commonly with Asp or Glu in the P6 position, Cys or Thr in P1 and Ser or Ala in P1'.. The enzyme catalyses a ribonucleoside 5'-triphosphate + H2O = a ribonucleoside 5'-diphosphate + phosphate + H(+). It catalyses the reaction ATP + H2O = ADP + phosphate + H(+). It carries out the reaction RNA(n) + a ribonucleoside 5'-triphosphate = RNA(n+1) + diphosphate. Inhibited by the antiviral drug hexamethylene amiloride. Inhibition by amantadine appears to be genotype-dependent. Also inhibited by long-alkyl-chain iminosugar derivatives. Its activity is regulated as follows. Activity is up-regulated by PRK2/PKN2-mediated phosphorylation. Functionally, packages viral RNA to form a viral nucleocapsid, and promotes virion budding. Participates in the viral particle production as a result of its interaction with the non-structural protein 5A. Binds RNA and may function as a RNA chaperone to induce the RNA structural rearrangements taking place during virus replication. Modulates viral translation initiation by interacting with viral IRES and 40S ribosomal subunit. Affects various cell signaling pathways, host immunity and lipid metabolism. Prevents the establishment of cellular antiviral state by blocking the interferon-alpha/beta (IFN-alpha/beta) and IFN-gamma signaling pathways and by blocking the formation of phosphorylated STAT1 and promoting ubiquitin-mediated proteasome-dependent degradation of STAT1. Activates STAT3 leading to cellular transformation. Regulates the activity of cellular genes, including c-myc and c-fos. May repress the promoter of p53, and sequester CREB3 and SP110 isoform 3/Sp110b in the cytoplasm. Represses cell cycle negative regulating factor CDKN1A, thereby interrupting an important check point of normal cell cycle regulation. Targets transcription factors involved in the regulation of inflammatory responses and in the immune response: suppresses TNF-induced NF-kappa-B activation, and activates AP-1. Binds to dendritic cells (DCs) via C1QR1, resulting in down-regulation of T-lymphocytes proliferation. Alters lipid metabolism by interacting with hepatocellular proteins involved in lipid accumulation and storage. Induces up-regulation of FAS promoter activity, and thereby contributes to the increased triglyceride accumulation in hepatocytes (steatosis). In terms of biological role, forms a heterodimer with envelope glycoprotein E2, which mediates virus attachment to the host cell, virion internalization through clathrin-dependent endocytosis and fusion with host membrane. Fusion with the host cell is most likely mediated by both E1 and E2, through conformational rearrangements of the heterodimer required for fusion rather than a classical class II fusion mechanism. E1/E2 heterodimer binds host apolipoproteins such as APOB and ApoE thereby forming a lipo-viro-particle (LVP). APOE associated to the LVP allows the initial virus attachment to cell surface receptors such as the heparan sulfate proteoglycans (HSPGs), syndecan-1 (SDC1), syndecan-1 (SDC2), the low-density lipoprotein receptor (LDLR) and scavenger receptor class B type I (SCARB1). The cholesterol transfer activity of SCARB1 allows E2 exposure and binding of E2 to SCARB1 and the tetraspanin CD81. E1/E2 heterodimer binding on CD81 activates the epithelial growth factor receptor (EGFR) signaling pathway. Diffusion of the complex E1-E2-EGFR-SCARB1-CD81 to the cell lateral membrane allows further interaction with Claudin 1 (CLDN1) and occludin (OCLN) to finally trigger HCV entry. Its function is as follows. Forms a heterodimer with envelope glycoprotein E1, which mediates virus attachment to the host cell, virion internalization through clathrin-dependent endocytosis and fusion with host membrane. Fusion with the host cell is most likely mediated by both E1 and E2, through conformational rearrangements of the heterodimer required for fusion rather than a classical class II fusion mechanism. The interaction between envelope glycoprotein E2 and host apolipoprotein E/APOE allows the proper assembly, maturation and infectivity of the viral particles. This interaction is probably promoted via the up-regulation of cellular autophagy by the virus. E1/E2 heterodimer binds host apolipoproteins such as APOB and APOE thereby forming a lipo-viro-particle (LVP). APOE associated to the LVP allows the initial virus attachment to cell surface receptors such as the heparan sulfate proteoglycans (HSPGs), syndecan-1 (SDC1), syndecan-1 (SDC2), the low-density lipoprotein receptor (LDLR) and scavenger receptor class B type I (SCARB1). The cholesterol transfer activity of SCARB1 allows E2 exposure and binding of E2 to SCARB1 and the tetraspanin CD81. E1/E2 heterodimer binding on CD81 activates the epithelial growth factor receptor (EGFR) signaling pathway. Diffusion of the complex E1-E2-EGFR-SCARB1-CD81 to the cell lateral membrane allows further interaction with Claudin 1 (CLDN1) and occludin (OCLN) to finally trigger HCV entry. Inhibits host EIF2AK2/PKR activation, preventing the establishment of an antiviral state. Viral ligand for CD209/DC-SIGN and CLEC4M/DC-SIGNR, which are respectively found on dendritic cells (DCs), and on liver sinusoidal endothelial cells and macrophage-like cells of lymph node sinuses. These interactions allow the capture of circulating HCV particles by these cells and subsequent facilitated transmission to permissive cells such as hepatocytes and lymphocyte subpopulations. The interaction between E2 and host amino acid transporter complex formed by SLC3A2 and SLC7A5/LAT1 may facilitate viral entry into host cell. Ion channel protein that acts as a viroporin and plays an essential role in the assembly, envelopment and secretion of viral particles. Regulates the host cell secretory pathway, which induces the intracellular retention of viral glycoproteins and favors assembly of viral particles. Creates a pore in acidic organelles and releases Ca(2+) and H(+) in the cytoplasm of infected cells, leading to a productive viral infection. High levels of cytoplasmic Ca(2+) may trigger membrane trafficking and transport of viral ER-associated proteins to viroplasms, sites of viral genome replication. This ionic imbalance induces the assembly of the inflammasome complex, which triggers the maturation of pro-IL-1beta into IL-1beta through the action of caspase-1. Targets also host mitochondria and induces mitochondrial depolarization. In addition of its role as a viroporin, acts as a lipid raft adhesion factor. Functionally, cysteine protease required for the proteolytic auto-cleavage between the non-structural proteins NS2 and NS3. The N-terminus of NS3 is required for the function of NS2 protease (active region NS2-3). Promotes the initiation of viral particle assembly by mediating the interaction between structural and non-structural proteins. In terms of biological role, displays three enzymatic activities: serine protease with a chymotrypsin-like fold, NTPase and RNA helicase. NS3 serine protease, in association with NS4A, is responsible for the cleavages of NS3-NS4A, NS4A-NS4B, NS4B-NS5A and NS5A-NS5B. The NS3/NS4A complex prevents phosphorylation of host IRF3, thus preventing the establishment of dsRNA induced antiviral state. The NS3/NS4A complex induces host amino acid transporter component SLC3A2, thus contributing to HCV propagation. NS3 RNA helicase binds to RNA and unwinds both dsDNA and dsRNA in the 3' to 5' direction, and likely resolves RNA complicated stable secondary structures in the template strand. Binds a single ATP and catalyzes the unzipping of a single base pair of dsRNA. Inhibits host antiviral proteins TBK1 and IRF3 thereby preventing the establishment of an antiviral state. Cleaves host MAVS/CARDIF thereby preventing the establishment of an antiviral state. Cleaves host TICAM1/TRIF, thereby disrupting TLR3 signaling and preventing the establishment of an antiviral state. Its function is as follows. Induces a specific membrane alteration that serves as a scaffold for the virus replication complex. This membrane alteration gives rise to the so-called ER-derived membranous web that contains the replication complex. NS4B self-interaction contributes to its function in membranous web formation. Promotes host TRIF protein degradation in a CASP8-dependent manner thereby inhibiting host TLR3-mediated interferon signaling. Disrupts the interaction between STING and TBK1 contributing to the inhibition of interferon signaling. Phosphorylated protein that is indispensable for viral replication and assembly. Both hypo- and hyperphosphorylated states are required for the viral life cycle. The hyperphosphorylated form of NS5A is an inhibitor of viral replication. Involved in RNA-binding and especially in binding to the viral genome. Zinc is essential for RNA-binding. Participates in the viral particle production as a result of its interaction with the mature viral core protein. Its interaction with host VAPB may target the viral replication complex to vesicles. Down-regulates viral IRES translation initiation. Mediates interferon resistance, presumably by interacting with and inhibiting host EIF2AK2/PKR. Prevents BIN1-induced apoptosis. Acts as a transcriptional activator of some host genes important for viral replication when localized in the nucleus. Via the interaction with host PACSIN2, modulates lipid droplet formation in order to promote virion assembly. Modulates TNFRSF21/DR6 signaling pathway for viral propagation. Functionally, RNA-dependent RNA polymerase that performs primer-template recognition and RNA synthesis during viral replication. Initiates RNA transcription/replication at a flavin adenine dinucleotide (FAD), resulting in a 5'- FAD cap on viral RNAs. In this way, recognition of viral 5' RNA by host pattern recognition receptors can be bypassed, thereby evading activation of antiviral pathways. The polypeptide is Genome polyprotein (Homo sapiens (Human)).